Here is a 372-residue protein sequence, read N- to C-terminus: Alanine dehydrogenase 2 (372 aa).

Residue H95 is part of the active site. Position 169–199 (169–199) interacts with NAD(+); it reads KVTIIGGGQAGTNAAKIALGLGADVTILDVN.

This sequence belongs to the AlaDH/PNT family.

It carries out the reaction L-alanine + NAD(+) + H2O = pyruvate + NH4(+) + NADH + H(+). It functions in the pathway amino-acid degradation; L-alanine degradation via dehydrogenase pathway; NH(3) and pyruvate from L-alanine: step 1/1. Functionally, may play a role in cell wall synthesis as L-alanine is an important constituent of the peptidoglycan layer. The polypeptide is Alanine dehydrogenase 2 (ald2) (Staphylococcus aureus (strain COL)).